The sequence spans 594 residues: TOX high mobility group box family member 4-B (594 aa).

Disordered regions lie at residues Gly-160–Pro-225 and Glu-522–Cys-545. Residues Lys-207–Lys-217 are compositionally biased toward basic residues. The short motif at Lys-212–Lys-217 is the Nuclear localization signal element. A DNA-binding region (HMG box) is located at residues Pro-222 to Lys-290.

Component of the PNUTS-PP1 phosphatase complex.

It localises to the nucleus. The protein localises to the chromosome. Its function is as follows. Transcription factor that modulates cell fate reprogramming from the somatic state to the pluripotent and neuronal fate. Also acts as a regulatory component of protein phosphatase 1 (PP1) complexes. Component of the PNUTS-PP1 protein phosphatase complex, a PP1 complex that regulates RNA polymerase II transcription pause-release. PNUTS-PP1 also plays a role in the control of chromatin structure and cell cycle progression during the transition from mitosis into interphase. This Xenopus laevis (African clawed frog) protein is TOX high mobility group box family member 4-B (tox4-b).